The sequence spans 641 residues: 1-deoxy-D-xylulose-5-phosphate synthase (641 aa).

Residues H78 and 119-121 (AHS) each bind thiamine diphosphate. D150 lines the Mg(2+) pocket. Residues 151–152 (GA), N179, Y288, and E370 each bind thiamine diphosphate. N179 contributes to the Mg(2+) binding site.

Belongs to the transketolase family. DXPS subfamily. Homodimer. Mg(2+) serves as cofactor. Thiamine diphosphate is required as a cofactor.

It catalyses the reaction D-glyceraldehyde 3-phosphate + pyruvate + H(+) = 1-deoxy-D-xylulose 5-phosphate + CO2. It functions in the pathway metabolic intermediate biosynthesis; 1-deoxy-D-xylulose 5-phosphate biosynthesis; 1-deoxy-D-xylulose 5-phosphate from D-glyceraldehyde 3-phosphate and pyruvate: step 1/1. Functionally, catalyzes the acyloin condensation reaction between C atoms 2 and 3 of pyruvate and glyceraldehyde 3-phosphate to yield 1-deoxy-D-xylulose-5-phosphate (DXP). The sequence is that of 1-deoxy-D-xylulose-5-phosphate synthase from Azorhizobium caulinodans (strain ATCC 43989 / DSM 5975 / JCM 20966 / LMG 6465 / NBRC 14845 / NCIMB 13405 / ORS 571).